We begin with the raw amino-acid sequence, 399 residues long: UDP-N-acetylglucosamine--N-acetylmuramyl-(pentapeptide) pyrophosphoryl-undecaprenol N-acetylglucosamine transferase (399 aa).

Positions 1–31 (MTSRFGHSQHPRRGRSARARAGRREGVQSNF) are disordered. Residues 7-21 (HSQHPRRGRSARARA) show a composition bias toward basic residues. UDP-N-acetyl-alpha-D-glucosamine-binding positions include 58–60 (TGG), N170, R206, S234, I288, and Q333.

It belongs to the glycosyltransferase 28 family. MurG subfamily.

The protein localises to the cell inner membrane. The catalysed reaction is di-trans,octa-cis-undecaprenyl diphospho-N-acetyl-alpha-D-muramoyl-L-alanyl-D-glutamyl-meso-2,6-diaminopimeloyl-D-alanyl-D-alanine + UDP-N-acetyl-alpha-D-glucosamine = di-trans,octa-cis-undecaprenyl diphospho-[N-acetyl-alpha-D-glucosaminyl-(1-&gt;4)]-N-acetyl-alpha-D-muramoyl-L-alanyl-D-glutamyl-meso-2,6-diaminopimeloyl-D-alanyl-D-alanine + UDP + H(+). The protein operates within cell wall biogenesis; peptidoglycan biosynthesis. Functionally, cell wall formation. Catalyzes the transfer of a GlcNAc subunit on undecaprenyl-pyrophosphoryl-MurNAc-pentapeptide (lipid intermediate I) to form undecaprenyl-pyrophosphoryl-MurNAc-(pentapeptide)GlcNAc (lipid intermediate II). The polypeptide is UDP-N-acetylglucosamine--N-acetylmuramyl-(pentapeptide) pyrophosphoryl-undecaprenol N-acetylglucosamine transferase (Acidovorax sp. (strain JS42)).